The primary structure comprises 105 residues: Insulin (105 aa).

The first 22 residues, 1-22, serve as a signal peptide directing secretion; that stretch reads MAFWLQAASLLVLLALSPGVDA. Disulfide bonds link Cys29–Cys91, Cys41–Cys104, and Cys90–Cys95. The propeptide at 53–82 is c peptide; that stretch reads DVDPLIGFLSPKSAKENEEYPFKDQTEMMV.

It belongs to the insulin family. Heterodimer of a B chain and an A chain linked by two disulfide bonds.

The protein localises to the secreted. Functionally, insulin decreases blood glucose concentration. It increases cell permeability to monosaccharides, amino acids and fatty acids. It accelerates glycolysis, the pentose phosphate cycle, and glycogen synthesis in liver. This chain is Insulin (ins), found in Oncorhynchus keta (Chum salmon).